The chain runs to 456 residues: Probable mannan endo-1,4-beta-mannosidase F (456 aa).

An N-terminal signal peptide occupies residues 1 to 18 (MRPLSSAALLSAIGAVAA). Residues 19–54 (QVGPWGQCGGQSYTGGTSCVSGWACVFLNDWYSQCQ) enclose the CBM1 domain. Positions 79 to 110 (STSVSATAPPSSTSSSTASVSSSTSSTPIPTS) are disordered. Residues 79-113 (STSVSATAPPSSTSSSTASVSSSTSSTPIPTSSGS) form a ser-rich linker region. The tract at residues 114–456 (FVKAEGLKFN…CAVIDHVSRI (343 aa)) is catalytic. Residues W166 and N280 each coordinate substrate. E281 functions as the Proton donor in the catalytic mechanism. Y356 serves as a coordination point for substrate. Residue E390 is the Nucleophile of the active site. Position 420 (W420) interacts with substrate.

The protein belongs to the glycosyl hydrolase 5 (cellulase A) family.

Its subcellular location is the secreted. It catalyses the reaction Random hydrolysis of (1-&gt;4)-beta-D-mannosidic linkages in mannans, galactomannans and glucomannans.. Functionally, endo-1,4-mannanase, a crucial enzyme for depolymerization of seed galactomannans and wood galactoglucomannans. The protein is Probable mannan endo-1,4-beta-mannosidase F (manF) of Neosartorya fischeri (strain ATCC 1020 / DSM 3700 / CBS 544.65 / FGSC A1164 / JCM 1740 / NRRL 181 / WB 181) (Aspergillus fischerianus).